The chain runs to 370 residues: 3-isopropylmalate dehydrogenase (370 aa).

77–90 serves as a coordination point for NAD(+); the sequence is GPKWDSVPYEVRPE. Substrate is bound by residues Arg97, Arg107, Arg135, and Asp226. Mg(2+)-binding residues include Asp226, Asp250, and Asp254. 290–302 contributes to the NAD(+) binding site; it reads GSAPDIAGQGLAN.

The protein belongs to the isocitrate and isopropylmalate dehydrogenases family. LeuB type 1 subfamily. As to quaternary structure, homodimer. Mg(2+) serves as cofactor. Requires Mn(2+) as cofactor.

The protein resides in the cytoplasm. It catalyses the reaction (2R,3S)-3-isopropylmalate + NAD(+) = 4-methyl-2-oxopentanoate + CO2 + NADH. Its pathway is amino-acid biosynthesis; L-leucine biosynthesis; L-leucine from 3-methyl-2-oxobutanoate: step 3/4. In terms of biological role, catalyzes the oxidation of 3-carboxy-2-hydroxy-4-methylpentanoate (3-isopropylmalate) to 3-carboxy-4-methyl-2-oxopentanoate. The product decarboxylates to 4-methyl-2 oxopentanoate. The chain is 3-isopropylmalate dehydrogenase from Nitrobacter winogradskyi (strain ATCC 25391 / DSM 10237 / CIP 104748 / NCIMB 11846 / Nb-255).